Here is a 397-residue protein sequence, read N- to C-terminus: Cathepsin E (397 aa).

A signal peptide spans 1-20 (MKPLLVLLLLLLLDLAQAQG). Residues 21-59 (ALHRVPLRRHQSLRKKLRAQGQLSEFWRSHNLDMTRLSE) constitute a propeptide, activation peptide. Positions 79–393 (YFGTISIGTP…DRGNNQVGLA (315 aa)) constitute a Peptidase A1 domain. Residue Asn-91 is glycosylated (N-linked (GlcNAc...) asparagine). The active site involves Asp-97. 2 cysteine pairs are disulfide-bonded: Cys-110–Cys-115 and Cys-273–Cys-277. The active site involves Asp-282. A glycan (N-linked (GlcNAc...) asparagine) is linked at Asn-323.

The protein belongs to the peptidase A1 family. In terms of assembly, homodimer; disulfide-linked. Post-translationally, glycosylated. The nature of the carbohydrate chain varies between cell types. In fibroblasts, the proenzyme contains a high mannose-type oligosaccharide, while the mature enzyme contains a complex-type oligosaccharide. In terms of tissue distribution, expressed abundantly in the stomach, club cells and alveolar macrophages of the lung, brain microglia, spleen and activated B-lymphocytes. Not expressed in resting B-lymphocytes.

It is found in the endosome. The catalysed reaction is Similar to cathepsin D, but slightly broader specificity.. Functionally, may have a role in immune function. Probably involved in the processing of antigenic peptides during MHC class II-mediated antigen presentation. May play a role in activation-induced lymphocyte depletion in the thymus, and in neuronal degeneration and glial cell activation in the brain. The sequence is that of Cathepsin E (Ctse) from Mus musculus (Mouse).